Here is a 184-residue protein sequence, read N- to C-terminus: Ras-related protein Rap1 (184 aa).

GTP is bound at residue 10–17 (GSGGVGKS). An Effector region motif is present at residues 32 to 40 (YDPTIEDSY). GTP is bound by residues 57–61 (DTAGT) and 116–119 (NKCD). Cys181 carries the post-translational modification Cysteine methyl ester. Residue Cys181 is the site of S-geranylgeranyl cysteine attachment. The propeptide at 182–184 (VLL) is removed in mature form.

Belongs to the small GTPase superfamily. Ras family.

It is found in the cell membrane. It carries out the reaction GTP + H2O = GDP + phosphate + H(+). Alternates between an inactive form bound to GDP and an active form bound to GTP. Activated by a guanine nucleotide-exchange factor (GEF) and inactivated by a GTPase-activating protein (GAP). Functionally, ras proteins bind GDP/GTP and possess intrinsic GTPase activity. Plays a role in photoreceptor cell determination. The polypeptide is Ras-related protein Rap1 (Drosophila melanogaster (Fruit fly)).